The sequence spans 64 residues: Orcokinin peptides (64 aa).

2 consecutive propeptides follow at residues 1–6 (MNIRPG) and 23–24 (NI).

It belongs to the orcokinin family. In terms of tissue distribution, orcokinin-3 is expressed throughout the central nervous system (at protein level).

Its subcellular location is the secreted. Functionally, myotropic peptides. The polypeptide is Orcokinin peptides (Camponotus floridanus (Florida carpenter ant)).